Here is a 433-residue protein sequence, read N- to C-terminus: Trigger factor (433 aa).

The 86-residue stretch at 166-251 (GDFAVIDFEG…LHEIQERAKP (86 aa)) folds into the PPIase FKBP-type domain.

Belongs to the FKBP-type PPIase family. Tig subfamily.

The protein localises to the cytoplasm. It catalyses the reaction [protein]-peptidylproline (omega=180) = [protein]-peptidylproline (omega=0). Functionally, involved in protein export. Acts as a chaperone by maintaining the newly synthesized protein in an open conformation. Functions as a peptidyl-prolyl cis-trans isomerase. The protein is Trigger factor of Aliarcobacter butzleri (strain RM4018) (Arcobacter butzleri).